Reading from the N-terminus, the 378-residue chain is S-adenosylmethionine:tRNA ribosyltransferase-isomerase (378 aa).

It belongs to the QueA family. As to quaternary structure, monomer.

The protein localises to the cytoplasm. It carries out the reaction 7-aminomethyl-7-carbaguanosine(34) in tRNA + S-adenosyl-L-methionine = epoxyqueuosine(34) in tRNA + adenine + L-methionine + 2 H(+). The protein operates within tRNA modification; tRNA-queuosine biosynthesis. Functionally, transfers and isomerizes the ribose moiety from AdoMet to the 7-aminomethyl group of 7-deazaguanine (preQ1-tRNA) to give epoxyqueuosine (oQ-tRNA). The polypeptide is S-adenosylmethionine:tRNA ribosyltransferase-isomerase (Prochlorococcus marinus (strain MIT 9312)).